Reading from the N-terminus, the 467-residue chain is Tel2-interacting protein 2 (467 aa).

Residues 4–45 (YKELARRLHTLQSKNEKEALEKQIDFLDKLVVEVDSLVHEQD) adopt a coiled-coil conformation.

Belongs to the TTI2 family. Component of the TTT complex composed of tel2, tti1 and tti2. Interacts with tel2 and ttiI1. Component of the ASTRA complex composed of at least rvb1, rvb2, tra1, tel2, tti1 and tti2.

It localises to the nucleus. Its function is as follows. Component of the tel2-tti1-tti2 (TTT) complex that stabilizes protein levels of the phosphatidylinositol 3-kinase-related protein kinase (PIKK) family proteins. The TTT complex is involved in the cellular resistance to DNA damage stresses, like ionizing radiation (IR), ultraviolet (UV) and mitomycin C (MMC). Component of the ASTRA complex involved in chromatin remodeling. This chain is Tel2-interacting protein 2, found in Schizosaccharomyces pombe (strain 972 / ATCC 24843) (Fission yeast).